We begin with the raw amino-acid sequence, 375 residues long: tRNA-specific 2-thiouridylase MnmA (375 aa).

Residues 12–19 and Met38 contribute to the ATP site; that span reads GMSGGVDS. The interaction with target base in tRNA stretch occupies residues 98 to 100; it reads NPD. Cys103 (nucleophile) is an active-site residue. A disulfide bond links Cys103 and Cys200. Gly127 provides a ligand contact to ATP. The interaction with tRNA stretch occupies residues 150 to 152; the sequence is KDQ. The active-site Cysteine persulfide intermediate is the Cys200. The segment at 312–313 is interaction with tRNA; the sequence is RY.

It belongs to the MnmA/TRMU family.

It localises to the cytoplasm. The catalysed reaction is S-sulfanyl-L-cysteinyl-[protein] + uridine(34) in tRNA + AH2 + ATP = 2-thiouridine(34) in tRNA + L-cysteinyl-[protein] + A + AMP + diphosphate + H(+). Catalyzes the 2-thiolation of uridine at the wobble position (U34) of tRNA, leading to the formation of s(2)U34. The chain is tRNA-specific 2-thiouridylase MnmA from Lactobacillus johnsonii (strain CNCM I-12250 / La1 / NCC 533).